The primary structure comprises 158 residues: Ribonuclease H (158 aa).

One can recognise an RNase H type-1 domain in the interval 9-155 (AFKPVELYTD…CDKLAVAAYQ (147 aa)). 4 residues coordinate Mg(2+): Asp-18, Glu-58, Asp-80, and Asp-147.

It belongs to the RNase H family. As to quaternary structure, monomer. Requires Mg(2+) as cofactor.

It localises to the cytoplasm. It catalyses the reaction Endonucleolytic cleavage to 5'-phosphomonoester.. In terms of biological role, endonuclease that specifically degrades the RNA of RNA-DNA hybrids. This chain is Ribonuclease H, found in Rhodopirellula baltica (strain DSM 10527 / NCIMB 13988 / SH1).